The chain runs to 291 residues: Phosphoribulokinase (291 aa).

Residue 12-20 (GSSGAGTTS) participates in ATP binding.

The protein belongs to the phosphoribulokinase family. As to quaternary structure, homooctamer.

It catalyses the reaction D-ribulose 5-phosphate + ATP = D-ribulose 1,5-bisphosphate + ADP + H(+). Its pathway is carbohydrate biosynthesis; Calvin cycle. In Xanthobacter flavus, this protein is Phosphoribulokinase (cbbP).